The following is a 134-amino-acid chain: ATP synthase epsilon chain, chloroplastic (134 aa).

It belongs to the ATPase epsilon chain family. F-type ATPases have 2 components, CF(1) - the catalytic core - and CF(0) - the membrane proton channel. CF(1) has five subunits: alpha(3), beta(3), gamma(1), delta(1), epsilon(1). CF(0) has three main subunits: a, b and c.

It localises to the plastid. Its subcellular location is the chloroplast thylakoid membrane. In terms of biological role, produces ATP from ADP in the presence of a proton gradient across the membrane. This chain is ATP synthase epsilon chain, chloroplastic, found in Spinacia oleracea (Spinach).